A 119-amino-acid chain; its full sequence is Phosphoribosyl-AMP cyclohydrolase (119 aa).

Asp-71 provides a ligand contact to Mg(2+). Cys-72 contacts Zn(2+). Mg(2+) contacts are provided by Asp-73 and Asp-75. Residues Cys-90 and Cys-97 each contribute to the Zn(2+) site.

This sequence belongs to the PRA-CH family. As to quaternary structure, homodimer. The cofactor is Mg(2+). Requires Zn(2+) as cofactor.

The protein localises to the cytoplasm. It carries out the reaction 1-(5-phospho-beta-D-ribosyl)-5'-AMP + H2O = 1-(5-phospho-beta-D-ribosyl)-5-[(5-phospho-beta-D-ribosylamino)methylideneamino]imidazole-4-carboxamide. It participates in amino-acid biosynthesis; L-histidine biosynthesis; L-histidine from 5-phospho-alpha-D-ribose 1-diphosphate: step 3/9. Catalyzes the hydrolysis of the adenine ring of phosphoribosyl-AMP. The sequence is that of Phosphoribosyl-AMP cyclohydrolase from Brucella abortus (strain 2308).